A 697-amino-acid polypeptide reads, in one-letter code: Transmembrane protein 168 (697 aa).

3 helical membrane passes run 36-56 (LGYL…YVRW), 63-83 (LILV…ILYY), and 89-109 (AASL…LCFL). N-linked (GlcNAc...) asparagine glycosylation occurs at Asn111. 5 helical membrane-spanning segments follow: residues 172-192 (MLVE…MLII), 199-219 (FLAI…SLET), 223-243 (PIAF…DIYF), 265-285 (LSVL…AFKL), and 293-313 (FVIP…IIFL). Residue Asn337 is glycosylated (N-linked (GlcNAc...) asparagine). 2 helical membrane-spanning segments follow: residues 352–372 (FCLI…ILGA) and 380–400 (GIFL…HGLF). 2 N-linked (GlcNAc...) asparagine glycosylation sites follow: Asn533 and Asn598.

The protein belongs to the TMEM168 family.

The protein resides in the nucleus membrane. In terms of biological role, plays a key role in maintaining the cardiac electrical stability by modulating cell surface expression of SCN5A. Plays a role i the modulation of anxiety behavior by regulating GABAergic neuronal system in the nucleus accumbens. The chain is Transmembrane protein 168 (Tmem168) from Mus musculus (Mouse).